A 173-amino-acid chain; its full sequence is Sporulation-specific protein 12 (173 aa).

Residues 1-12 (MSNKASDQSART) are compositionally biased toward polar residues. The disordered stretch occupies residues 1-56 (MSNKASDQSARTASILKTDITRENTITRSSSSNNDNYHHHNNINNYNESAKTGEDA). At S2 the chain carries N-acetylserine. Phosphoserine occurs at positions 118 and 125. A negative-charged tail region spans residues 159–173 (DSEDVEIDEDEEYFY).

Its function is as follows. It is required for meiosis I chromosome division during sporulation. A component of the FEAR (CDC14 early anaphase release) network which promotes CDC14 release from the nucleolus during early anaphase. The chain is Sporulation-specific protein 12 (SPO12) from Saccharomyces cerevisiae (strain ATCC 204508 / S288c) (Baker's yeast).